The chain runs to 388 residues: MKLSKRIENLPPYLFVQISKKIAEKRAKGEEVISFAIGDPDLPTPKHILAELCKAAEDPSNHRYPETEGLPVLRKAMAEWYQKRFGVKLNPDTEVLPLIGSKEGIGHAAWCFLDPGDIALVPNPAYPVYAISSQLAGAEVFNLPLNKGNNFLPNLEAIPQNILSKAKVLWINYPNNPTGAVAGLSFFQEVANFAAKHNLAVCHDGPYSEIAFDGYKPVSFLEADGAKDVGIEFHSLSKSYNMTGWRIGMAVGNAKMIDALRRFKSNLDSGIPQAIQLMAIAALNGSQEIINQNCAIYQRRRDRLVESLRNIGMEVTAPKASLYIWAPVPESYTSASFATELLDKTGVVVTPGTGYGTAGEGYIRLSLTVPDEQIEKGIAKLAGYKKSS.

Substrate is bound by residues Y13, G38, K102, Y126, and N176. Residues 101 to 102, Y126, N176, Y207, and 235 to 237 each bind pyridoxal 5'-phosphate; these read SK and SLS. K238 is modified (N6-(pyridoxal phosphate)lysine). R246 lines the pyridoxal 5'-phosphate pocket. Substrate is bound at residue R364.

This sequence belongs to the class-I pyridoxal-phosphate-dependent aminotransferase family. LL-diaminopimelate aminotransferase subfamily. Homodimer. Requires pyridoxal 5'-phosphate as cofactor.

The catalysed reaction is (2S,6S)-2,6-diaminopimelate + 2-oxoglutarate = (S)-2,3,4,5-tetrahydrodipicolinate + L-glutamate + H2O + H(+). It participates in amino-acid biosynthesis; L-lysine biosynthesis via DAP pathway; LL-2,6-diaminopimelate from (S)-tetrahydrodipicolinate (aminotransferase route): step 1/1. Its function is as follows. Involved in the synthesis of meso-diaminopimelate (m-DAP or DL-DAP), required for both lysine and peptidoglycan biosynthesis. Catalyzes the direct conversion of tetrahydrodipicolinate to LL-diaminopimelate. The chain is LL-diaminopimelate aminotransferase from Dehalococcoides mccartyi (strain CBDB1).